Here is a 545-residue protein sequence, read N- to C-terminus: Purple acid phosphatase 13 (545 aa).

An N-terminal signal peptide occupies residues 1 to 25 (MVVKYTMSMSFFVIFASTVTIIVHG). N-linked (GlcNAc...) asparagine glycosylation is found at asparagine 125 and asparagine 145. A Fe cation-binding site is contributed by aspartate 203. An N-linked (GlcNAc...) asparagine glycan is attached at asparagine 209. Residue tyrosine 233 coordinates Fe cation. 6 N-linked (GlcNAc...) asparagine glycosylation sites follow: asparagine 240, asparagine 254, asparagine 306, asparagine 321, asparagine 351, and asparagine 367. Catalysis depends on histidine 389, which acts as the Proton donor. Histidine 416 is a binding site for Zn(2+). 416-418 (HVD) serves as a coordination point for substrate. Residues asparagine 428, asparagine 466, asparagine 475, and asparagine 510 are each glycosylated (N-linked (GlcNAc...) asparagine).

It belongs to the metallophosphoesterase superfamily. Purple acid phosphatase family. As to quaternary structure, homodimer. It depends on Fe cation as a cofactor. Requires Zn(2+) as cofactor. In terms of tissue distribution, expressed in stems, leaves, flowers and siliques.

The protein resides in the secreted. It catalyses the reaction a phosphate monoester + H2O = an alcohol + phosphate. The polypeptide is Purple acid phosphatase 13 (PAP13) (Arabidopsis thaliana (Mouse-ear cress)).